A 265-amino-acid polypeptide reads, in one-letter code: Putative 2-amino-3,7-dideoxy-D-threo-hept-6-ulosonate synthase 2 (265 aa).

Asp27 functions as the Proton acceptor in the catalytic mechanism. 1-deoxy-D-threo-hexo-2,5-diulose 6-phosphate is bound by residues 27-31 (DHGVS) and 147-149 (YPR). Tyr147 serves as the catalytic Proton donor. Lys177 functions as the Schiff-base intermediate with substrate in the catalytic mechanism. Residues 202–203 (GG) and 230–231 (GR) each bind 1-deoxy-D-threo-hexo-2,5-diulose 6-phosphate.

The protein belongs to the DeoC/FbaB aldolase family. ADHS subfamily. As to quaternary structure, homodecamer.

It carries out the reaction 1-deoxy-D-threo-hexo-2,5-diulose 6-phosphate + L-aspartate 4-semialdehyde = 2,3-dioxopropyl phosphate + 2-amino-2,3,7-trideoxy-D-lyxo-hept-6-ulosonate. Catalyzes a transaldol reaction between 6-deoxy-5-ketofructose 1-phosphate (DKFP) and L-aspartate semialdehyde (ASA) with an elimination of hydroxypyruvaldehyde phosphate to yield 2-amino-3,7-dideoxy-D-threo-hept-6-ulosonate (ADH). Plays a key role in an alternative pathway of the biosynthesis of 3-dehydroquinate (DHQ), which is involved in the canonical pathway for the biosynthesis of aromatic amino acids. In Archaeoglobus fulgidus (strain ATCC 49558 / DSM 4304 / JCM 9628 / NBRC 100126 / VC-16), this protein is Putative 2-amino-3,7-dideoxy-D-threo-hept-6-ulosonate synthase 2.